A 362-amino-acid chain; its full sequence is Holliday junction branch migration complex subunit RuvB (362 aa).

Residues 1–20 (MKRTIMTNTDTFEQPNTGAN) form a disordered region. The interval 15-203 (PNTGANEESL…FGFTAHLDFY (189 aa)) is large ATPase domain (RuvB-L). ATP is bound by residues Leu42, Arg43, Gly84, Lys87, Thr88, Thr89, 150–152 (EDF), Arg193, Tyr203, and Arg240. Thr88 contacts Mg(2+). The small ATPAse domain (RuvB-S) stretch occupies residues 204–274 (PHEELEKLIE…DVKEALALYQ (71 aa)). Positions 277–362 (TEGLDRLDIA…ESAYDVNEMS (86 aa)) are head domain (RuvB-H). Residues Arg332 and Arg337 each coordinate DNA.

It belongs to the RuvB family. In terms of assembly, homohexamer. Forms an RuvA(8)-RuvB(12)-Holliday junction (HJ) complex. HJ DNA is sandwiched between 2 RuvA tetramers; dsDNA enters through RuvA and exits via RuvB. An RuvB hexamer assembles on each DNA strand where it exits the tetramer. Each RuvB hexamer is contacted by two RuvA subunits (via domain III) on 2 adjacent RuvB subunits; this complex drives branch migration. In the full resolvosome a probable DNA-RuvA(4)-RuvB(12)-RuvC(2) complex forms which resolves the HJ.

The protein localises to the cytoplasm. The enzyme catalyses ATP + H2O = ADP + phosphate + H(+). Its function is as follows. The RuvA-RuvB-RuvC complex processes Holliday junction (HJ) DNA during genetic recombination and DNA repair, while the RuvA-RuvB complex plays an important role in the rescue of blocked DNA replication forks via replication fork reversal (RFR). RuvA specifically binds to HJ cruciform DNA, conferring on it an open structure. The RuvB hexamer acts as an ATP-dependent pump, pulling dsDNA into and through the RuvAB complex. RuvB forms 2 homohexamers on either side of HJ DNA bound by 1 or 2 RuvA tetramers; 4 subunits per hexamer contact DNA at a time. Coordinated motions by a converter formed by DNA-disengaged RuvB subunits stimulates ATP hydrolysis and nucleotide exchange. Immobilization of the converter enables RuvB to convert the ATP-contained energy into a lever motion, pulling 2 nucleotides of DNA out of the RuvA tetramer per ATP hydrolyzed, thus driving DNA branch migration. The RuvB motors rotate together with the DNA substrate, which together with the progressing nucleotide cycle form the mechanistic basis for DNA recombination by continuous HJ branch migration. Branch migration allows RuvC to scan DNA until it finds its consensus sequence, where it cleaves and resolves cruciform DNA. The protein is Holliday junction branch migration complex subunit RuvB of Bifidobacterium adolescentis (strain ATCC 15703 / DSM 20083 / NCTC 11814 / E194a).